A 631-amino-acid polypeptide reads, in one-letter code: Phosphomethylpyrimidine synthase (631 aa).

Residues Asn-239, Met-268, Tyr-297, His-333, 353 to 355 (SRG), 394 to 397 (DGLR), and Glu-433 each bind substrate. Residue His-437 participates in Zn(2+) binding. Tyr-460 contributes to the substrate binding site. Residue His-501 coordinates Zn(2+). Positions 581, 584, and 589 each coordinate [4Fe-4S] cluster.

Belongs to the ThiC family. In terms of assembly, homodimer. Requires [4Fe-4S] cluster as cofactor.

It catalyses the reaction 5-amino-1-(5-phospho-beta-D-ribosyl)imidazole + S-adenosyl-L-methionine = 4-amino-2-methyl-5-(phosphooxymethyl)pyrimidine + CO + 5'-deoxyadenosine + formate + L-methionine + 3 H(+). It functions in the pathway cofactor biosynthesis; thiamine diphosphate biosynthesis. Its function is as follows. Catalyzes the synthesis of the hydroxymethylpyrimidine phosphate (HMP-P) moiety of thiamine from aminoimidazole ribotide (AIR) in a radical S-adenosyl-L-methionine (SAM)-dependent reaction. This chain is Phosphomethylpyrimidine synthase, found in Salmonella heidelberg (strain SL476).